Consider the following 164-residue polypeptide: Nucleotide-binding protein Acid345_2028 (164 aa).

Belongs to the YajQ family.

In terms of biological role, nucleotide-binding protein. The protein is Nucleotide-binding protein Acid345_2028 of Koribacter versatilis (strain Ellin345).